Here is a 614-residue protein sequence, read N- to C-terminus: Dihydroxy-acid dehydratase (614 aa).

Asp-81 is a binding site for Mg(2+). Cys-122 is a [2Fe-2S] cluster binding site. Mg(2+) contacts are provided by Asp-123 and Lys-124. The residue at position 124 (Lys-124) is an N6-carboxylysine. Cys-193 contacts [2Fe-2S] cluster. Glu-489 is a Mg(2+) binding site. The active-site Proton acceptor is Ser-515.

It belongs to the IlvD/Edd family. In terms of assembly, homodimer. [2Fe-2S] cluster serves as cofactor. Mg(2+) is required as a cofactor.

The enzyme catalyses (2R)-2,3-dihydroxy-3-methylbutanoate = 3-methyl-2-oxobutanoate + H2O. It carries out the reaction (2R,3R)-2,3-dihydroxy-3-methylpentanoate = (S)-3-methyl-2-oxopentanoate + H2O. Its pathway is amino-acid biosynthesis; L-isoleucine biosynthesis; L-isoleucine from 2-oxobutanoate: step 3/4. It functions in the pathway amino-acid biosynthesis; L-valine biosynthesis; L-valine from pyruvate: step 3/4. Its function is as follows. Functions in the biosynthesis of branched-chain amino acids. Catalyzes the dehydration of (2R,3R)-2,3-dihydroxy-3-methylpentanoate (2,3-dihydroxy-3-methylvalerate) into 2-oxo-3-methylpentanoate (2-oxo-3-methylvalerate) and of (2R)-2,3-dihydroxy-3-methylbutanoate (2,3-dihydroxyisovalerate) into 2-oxo-3-methylbutanoate (2-oxoisovalerate), the penultimate precursor to L-isoleucine and L-valine, respectively. The chain is Dihydroxy-acid dehydratase from Hahella chejuensis (strain KCTC 2396).